The following is a 562-amino-acid chain: IRK-interacting protein (562 aa).

Disordered stretches follow at residues 29 to 61 (ASLMQMKSSPSSNYSLRNPSSSSAASPASRPLP) and 303 to 322 (VVSQENSGGRSSGKKNSEMP). Residues 36 to 61 (SSPSSNYSLRNPSSSSAASPASRPLP) show a composition bias toward low complexity. Residues 246–306 (SGVEKLKREL…LREATEVVSQ (61 aa)) are a coiled coil.

As to quaternary structure, interacts with IRK. In terms of tissue distribution, highly expressed in root tips, shoot apices and developing flowers.

This chain is IRK-interacting protein, found in Arabidopsis thaliana (Mouse-ear cress).